The primary structure comprises 244 residues: DnaJ homolog subfamily C member 4 (244 aa).

Residues 37-102 (NYYELLGVHP…ESRRNYDHQL (66 aa)) enclose the J domain. Residues 96-127 (RNYDHQLHSASPPKSSGSTAEPKYTQQTHSSW) form a disordered region. The span at 103–127 (HSASPPKSSGSTAEPKYTQQTHSSW) shows a compositional bias: polar residues. Residues 159 to 178 (VLGYCLLLMVAGMGLHYVAF) traverse the membrane as a helical segment. The interval 208 to 244 (RANRARIQQERQQRQQPRAEPSLPPESSRIMPQDTSP) is disordered.

The protein localises to the membrane. The protein is DnaJ homolog subfamily C member 4 (Dnajc4) of Mus musculus (Mouse).